Consider the following 91-residue polypeptide: Small ribosomal subunit protein uS19 (91 aa).

This sequence belongs to the universal ribosomal protein uS19 family.

Protein S19 forms a complex with S13 that binds strongly to the 16S ribosomal RNA. The polypeptide is Small ribosomal subunit protein uS19 (Cupriavidus pinatubonensis (strain JMP 134 / LMG 1197) (Cupriavidus necator (strain JMP 134))).